The chain runs to 739 residues: Sulfate transporter (739 aa).

Residues methionine 1–isoleucine 27 form a disordered region. A phosphoserine mark is found at serine 12 and serine 16. A run of 2 helical transmembrane segments spans residues valine 112 to leucine 132 and proline 137 to serine 157. N-linked (GlcNAc...) asparagine glycosylation is found at asparagine 199 and asparagine 205. The next 2 membrane-spanning stretches (helical) occupy residues isoleucine 219–phenylalanine 239 and glycine 242–phenylalanine 262. Residue asparagine 357 is glycosylated (N-linked (GlcNAc...) asparagine). The next 4 membrane-spanning stretches (helical) occupy residues leucine 378 to valine 398, alanine 420 to leucine 440, leucine 455 to phenylalanine 475, and leucine 524 to leucine 544. An STAS domain is found at alanine 568–alanine 719.

This sequence belongs to the SLC26A/SulP transporter (TC 2.A.53) family. In terms of processing, N-glycosylated. Ubiquitously expressed.

The protein resides in the cell membrane. Its subcellular location is the apical cell membrane. The enzyme catalyses oxalate(in) + sulfate(out) = oxalate(out) + sulfate(in). It catalyses the reaction sulfate(out) + 2 chloride(in) = sulfate(in) + 2 chloride(out). It carries out the reaction oxalate(out) + 2 chloride(in) = oxalate(in) + 2 chloride(out). The catalysed reaction is bromide(in) + chloride(out) = bromide(out) + chloride(in). The enzyme catalyses nitrate(in) + chloride(out) = nitrate(out) + chloride(in). It catalyses the reaction iodide(in) + chloride(out) = iodide(out) + chloride(in). Its activity is regulated as follows. An extracellular acidic pH inhibits chloride-sulfate and chloride-oxalate exchange activity whereas an intracellular acidic pH activates chloride-sulfate exchange with no effect on chloride-oxalate exchange activity. In terms of biological role, sulfate transporter which mediates sulfate uptake into chondrocytes in order to maintain adequate sulfation of proteoglycans which is needed for cartilage development. Mediates electroneutral anion exchange of sulfate ions for oxalate ions and of sulfate and oxalate ions for chloride ions. Mediates exchange of sulfate and oxalate ions for hydroxyl ions and of chloride ions for bromide, iodide and nitrate ions. The coupling of sulfate transport to both hydroxyl and chloride ions likely serves to ensure transport at both acidic pH when most sulfate uptake is mediated by sulfate-hydroxide exchange and alkaline pH when most sulfate uptake is mediated by sulfate-chloride exchange. Essential for chondrocyte proliferation, differentiation and cell size expansion. The chain is Sulfate transporter (SLC26A2) from Homo sapiens (Human).